Consider the following 470-residue polypeptide: MSLSRRQFIQASGIALCAGAVPLKASAAGQQQPLPVPPLLESRRGQPLFMTVQRAHWSFTLGTRASVWGINGSYLGPTIRVWKGDDVKLIYSNRLTENVSMTVAGLQVPGPLMGGPARMMSPNADWAPVLPIRQNAATLWYHANTPNRTAQQVYNGLAGMWLVEDEVSKSLPIPNHYGVDDFPVIIQDKRLDNFGTPEYNEPGSGGFVGDTLLVNGVQSPYVEVSRGWVRLRLLNASNSRRYQLQMSDGRPLHVISGDQGFLPAPVSVKQLSLAPGERREILVDMSNGDEVSITCGEAASIVDRIRGFFEPSSILVSTLVLTLRPTGLLPLVTDSLPMRLLPTEIMAGSPIRSRDISLGDDPGINGQLWDVNRIDVTAQQGTWERWTVRADEPQAFHIEGVMFQIRNVNGAMPFPEDRGWKDTVWVDGQVELLVYFGQPSWAHFPFYFNSQTLEMADRGSIGQLLVNPVP.

A signal peptide (tat-type signal) is located at residues 1–27; the sequence is MSLSRRQFIQASGIALCAGAVPLKASA. The Plastocyanin-like domain occupies 229–287; sequence VRLRLLNASNSRRYQLQMSDGRPLHVISGDQGFLPAPVSVKQLSLAPGERREILVDMSN.

The protein belongs to the FtsP family. Predicted to be exported by the Tat system. The position of the signal peptide cleavage has not been experimentally proven.

It is found in the periplasm. Its function is as follows. Cell division protein that is required for growth during stress conditions. May be involved in protecting or stabilizing the divisomal assembly under conditions of stress. The protein is Cell division protein FtsP of Shigella dysenteriae serotype 1 (strain Sd197).